We begin with the raw amino-acid sequence, 128 residues long: Secreted RxLR effector protein 57 (128 aa).

The signal sequence occupies residues 1–31 (MHRKRLRVVLSATLLDLITCVQLMLDPLVRS). Positions 58-61 (RILR) match the RxLR motif.

Belongs to the RxLR effector family.

It is found in the secreted. It localises to the host nucleus. Its subcellular location is the host cytoplasm. Secreted effector that completely suppresses the host cell death induced by cell death-inducing proteins. This is Secreted RxLR effector protein 57 from Plasmopara viticola (Downy mildew of grapevine).